The primary structure comprises 299 residues: GTPase Era (299 aa).

Residues 9–177 (RSGSVAVIGR…VGDLLKLVPE (169 aa)) enclose the Era-type G domain. The tract at residues 17 to 24 (GRPNVGKS) is G1. 17-24 (GRPNVGKS) provides a ligand contact to GTP. Residues 43–47 (QTTRH) are G2. The tract at residues 64-67 (DTPG) is G3. GTP-binding positions include 64 to 68 (DTPGL) and 126 to 129 (NKVD). The G4 stretch occupies residues 126–129 (NKVD). The segment at 156 to 158 (VSA) is G5. In terms of domain architecture, KH type-2 spans 200-284 (VREQLMRQLG…FLETWVRVRE (85 aa)).

It belongs to the TRAFAC class TrmE-Era-EngA-EngB-Septin-like GTPase superfamily. Era GTPase family. Monomer.

Its subcellular location is the cytoplasm. The protein localises to the cell inner membrane. In terms of biological role, an essential GTPase that binds both GDP and GTP, with rapid nucleotide exchange. Plays a role in 16S rRNA processing and 30S ribosomal subunit biogenesis and possibly also in cell cycle regulation and energy metabolism. This is GTPase Era from Xanthomonas oryzae pv. oryzae (strain MAFF 311018).